The following is a 250-amino-acid chain: Mediator of RNA polymerase II transcription subunit 8 (250 aa).

Residues 217 to 250 form a disordered region; that stretch reads SPMSAVSPGAGPLGKMPSGIKTNIKSANQVHPYR. Residues 236-250 are compositionally biased toward polar residues; that stretch reads IKTNIKSANQVHPYR.

This sequence belongs to the Mediator complex subunit 8 family. In terms of assembly, component of the Mediator complex.

Its subcellular location is the nucleus. Component of the Mediator complex, a coactivator involved in the regulated transcription of nearly all RNA polymerase II-dependent genes. Mediator functions as a bridge to convey information from gene-specific regulatory proteins to the basal RNA polymerase II transcription machinery. Mediator is recruited to promoters by direct interactions with regulatory proteins and serves as a scaffold for the assembly of a functional preinitiation complex with RNA polymerase II and the general transcription factors. The polypeptide is Mediator of RNA polymerase II transcription subunit 8 (MED8) (Aedes aegypti (Yellowfever mosquito)).